Consider the following 88-residue polypeptide: UPF0297 protein BPUM_2379 (88 aa).

Belongs to the UPF0297 family.

In Bacillus pumilus (strain SAFR-032), this protein is UPF0297 protein BPUM_2379.